Reading from the N-terminus, the 4367-residue chain is MKKTRTTAAERSQRARKRPHDEHRGRGREHGGARDPGAGGQAMKGAEKGRNPKHQATQKQMSFLQGKHQQRVGNVVSRLGPAAVGQTTLMDKKRKLYSDTSQQPLWSLRKITINPTDKDDLRRFPSNAIYTHRYSAMTFIFKNLWEQFHRVINWWFLVMAIIQAIPQLHYNPNHAWSTALPFAIVLVFGMLKDAFTDLGRRERDRVLNQRVCCIVDGHTPQLRLLQWQGVRVGNILRLTDGEEVPADIVVLATSNTDGVAYVETSKLDGETNLKFKQGVKETRGESSPLSIAGIRGRVVCEKPCAVMDAFTGSLKLDAHPRATPLDIVNFIQRGSHIRNTEWLYGVVIYTGEDTRIQKNAAPPGFKRPHIEKDINTYLFISFFIVFLTILISVMSKWSVQERDSGDTGVTDAGASSGSGSSSGETSQTYGSSVEFMLGSRDLLQNPWMSILRFLAVYAPVLPLSLPLILDVVYLLQSVLIEGDIHIRGGGRTPATGRGNGSTSSMTVADDGLPDGEAGGLDSAHSSQNASLQQPLSIVSKGFSKTRRFLSEKFSSPSSGQIGGNQDRRETPREDDERETNGENVPSATPLLPGGEAACVATGDEETLRADAEGAQERDREAEGNREQLKSVPTGTHAAWRPGALDSTAEANEDEDPDVLHAEKASGFGARRSDDRDRKSSCSRYPETGGEKTSHAISGRFTGSVMPSTYTKLHGDIANAGFESAWQPYANGHTHTRTLLLATGGGPNSLCATGNFEREDVWAEVHTPALNPNLGQVDFIFTDKTGTITENDMTFSMCSVAGKIYGMASCGGAGYEGAESSEYGSRVWTANETSARSSRDRLVPHLQRGTSAASSRSQSAPASANDEGTPRRIPTLMLRPQTLTNQQTGQQSPVLPASREDEKGKDASPGAADSPASSLSVSRFFGSVSYEGRLEETGSQKEEDSRSDRVSLSPSEGRVSGSRPQLACEGIHGATLRRRTVGIQSQHSSQSLLSSRQQSEDERQYTEGEEGETEDDRSTVSRRGRDRMYSRDYHRESRSSSPRDGELSDRYPLRCIRSIGDGYIIRGGRTGNVVMRHPSGMSFDSRPSSQFTFSSPVVGDDSFDDPRRAMYFGRGSPRSLTPPSERGTASPSVGEEGPPLSPQISPTGSARGRVPRSSSLYMPAVDEGEDRERYFRPRRRMLRPGASLLPPLSPSPSRAGVPFLYDNIDFPTGFRETPMEGQIRRNCDFYDASIFTDLARKDLRSHRINEFIKCMALCNTVVPWVYTATPCSSSCPGLPSTANFSVAAYPTGGGANSLFSCSASAFAGPVTQGFPSVTHPAALASDGAAGADEDEEKNVSQLLLPSGTSASSGAPSGPRGDPQLVSLLGRQGQGHGSLGAPGSGLPTSGCLGGAGGSGARGPMGLHGSRRSLPGSSDCRVPSTARPAPLLGSDAAGRGFGPDYVPSPRPLSPAGPPNASTGSLGEAPKADKPASPEEAASPGKDGEEAPSSTPRCVFAPSTLVPPSVLRSHTGAGGLRPSKSLARGVSFKEKHEEFAFSKDEDTATVDQDDTQSATDEEHDVEGEEEEAGKSAERLTKAKRNRSASASLMSLKSKVTASGRDVADLLFRRGSRGNSGTDPDPASARTVGRSSSVERAQQPPTHGGFSTVTGTGESRSSLVSIIKYQASSPDEECLVSAASHMGYTLVSRTNNYAILNINGQERRWQIIGVNEFTQKRGRMSIVVRPQEWTEGSILYVKGADVAMLDLLSTSFTRGHDFRQSFSCLSRYAESFSGGRGPQVSLSRLQSNSSAKGSGGPPVRRSVSGSDPRLQPSRSVSLPRTVPPGQETPMAGDQLEGPEAAETVNPSGQTYSQGEEEEGLRSRLARADSMLRSLNPALYNYDKQHQRGHGPEGDEGSHELEGHDAHTGDSHGGHHRDQAEPRAGDAVGPESASRLPQKTQNRLPQHLGNAGVCAHGHAWTPSEENYCAAFFDDDEDELIALGDIALVEQHLKRFSLQGLRTMALACRYLTQEETETYKRLYTDACASVYCRAERLEEVAEDMERDLEYLGITGVRDKLQEQVPETLQLMMEAGIRVWMVTGDNVEYALHICHSCRLLTSRTRIFHAALEFSGRKAKREGVMLYELFRKARRLKRSDEHICLVVTGPNLRTFLNHPDLQTYFLNMACCSDVVVAARVTPSQKAEMVRLVKKRLTPQPITMAVGDGGNDVAMLQEAHVGVAIRGKDSAAAVAAAYADYSFTEFRFLQRLLFVHGRLSLMRVSTVILWSFFKSLCIGLPTFLFQPQAFWSAVEVYDPLLLMIVDFFWTTLPGIIHGYSDQDLPTHLLPSVPVLYTPGRRRLYFNGFRFILWTVEGIIYSFLIFYLLQATWMDGNTFHDGQVLGFHSYGILLLFGSLLQSNVRIILETSLWTPTFLFTTIVLCTIMFFPTVLLYSVTGWPRRYMELAGRVVFAWPMLYFLIPLWVSIGILVQLLLQVFTSSLFPNISGSVKQYLAQKQADVNYRRKASKHPFSQPRPRLLPGGHDEYGLFCGMGSCWSLFKRSLWFMGGCCLMDTPNVADDFTASPALCAELRERFNPLRRKSVADRLPPPRRFRINENFLSYTGASEEKGADGVQRDLGGKGSACGPGAAGLAAGTGAPGAGRSKSVFGGGGGVMPMADMAADLETENSLSSNGSEQEKAGDNVTKLVKVSHLINRFTLRFKDMQLEADYQIHNKKSFLKRLVPWYRVIFMLIALYQLLSFLTEYFIDIHWNPGETEMEPWMCVPTLVVEIGFAAVVVCTFYDFIFLDHFSLILNSIVFLMVSSSIVFYTASHVDGTLTSVLFPVFTFVILRISFLQAVVWNILFLIVTVARFMLDKKYLPPLNFVHYIPLFIGIDVFVAFVGYRLEYNQRKSFLLDYSVDASRRKQREILNTMLPSFVVDQMINSELNEEGIPTSLKAEDRGTVSVIFCDVYEFQHVVASIEPTRLVEVLDSLFLCFDRSAEQFGCTKIETVFETYLAAAGLQPGREASPASYQQDACDALDMALAMLEVAAQIRYEVKSNQGVLSGSAVGSSSAVGPAVSASNLEASGNHMEPRLSLHGHNSGVAMGSRMNSSRFHRQKTGSVVRTVLQSRPQRIRVKIGIHSGRVISGVVGAKKPQYALFGDTVNTASRMKTTGQPGYIHISEDSYELVKGDDTLEYESRHTEVKGKGLMNTYLLVRVKGSPYPHFDDQEADEGDVISETGGQNGESRRSTASLPRQLETAGASSGVHTGEAMGCFASVGSRGESQTAADAAAAEAIEEDIQVEIDEEGVVEDTVEKAVEDVRRLRNEGSHAVASDDFPVSQAGAAQPRRCSRFLFQNAEEHGAAEPQRGEGARLILSPGQTEGTRQSEKEGSALGSNIAASARADRRPAGRREDSRGDSRFDYESMTTQQLLRIYRRQQKVAKVLQWIDEELRGQRDTAHRHARTADIVAKLLASSGDEQAAGESSEADHDEVPLDEIKEELRRQAREANEQESAKRSGGDAPPHTPTRKALLKAFRSEIVHGCAAPTEEEKTAKEGRESEVALASPETESRDANGQRVSERDASDAREGSASPQPDHAAPPSGLPQGLKGQETEKQQGWKLFRSASLVRAAGQSFASLFRRRKPAAPSEAASPSSADTPMDSRVSPTSVDDEDLEQNRVTRIGVSSEWLLLKFKDKNLEARYRTHFYNNKSNINTIEQALIIFLVTFCVQTLTRLALPRFYVVCSHHTINLHVCTGLYWAVRATYTLAAFVLWMLFHYRNRKEVATCLELRWMVFLLNLLFISASCVFALSNSWGVCGQQQEDHGASETAVENTLVALSHLAKDGSFPADDAEVNSVAGSPLAQAMHSPFTTAGVSRASRMLRSGGVSVSGGTDCTGVGTSGEEGSDLVTANGRAYTYWLLSDTIELFFYIVILHHNTGLLFQNCILVDVLLMTMSLTFIITTARETASTVSTIATFPCYVFFNLVSAYCKEYIDRLTFYVNEHAKTTESRATQLLNDMLPKQVLEEFQQDKLKLAYLHENVTFLFADICGFTSWAKGVDACEVVTMLQKLFAKFDKDSTKFGLYKLCTIGDAYVAVSEPVTAENAQDTDPREGMWLVYEMAKAMIGNITEVRERLCIPNLNMRIGLHYGSCVGGVIGSGRLRYDLWGMDVLTGNMMESNGVPGKINVSEILKNEMEKGFPGEFVFKFNKTVAVLQSTVDSYLIRPAKDFDEDEELAAAAATMAVAGPSASLQQGGGAIPQVQAVASGLRRDATSIRGNYRRRFTILGSAPRVLGRRQSLRGHQFSALALASHGDSGPSDEPRHLGDEGQAAGSVTSHDGPLREEVEDDEIDGLKQLRKEIERAGGLGLDASPSDIGSTPGSALGS.

The span at 1 to 10 (MKKTRTTAAE) shows a compositional bias: polar residues. Residues 1–70 (MKKTRTTAAE…MSFLQGKHQQ (70 aa)) are disordered. The Cytoplasmic portion of the chain corresponds to 1-150 (MKKTRTTAAE…FKNLWEQFHR (150 aa)). Residues 19 to 33 (PHDEHRGRGREHGGA) show a composition bias toward basic and acidic residues. Over residues 54–63 (HQATQKQMSF) the composition is skewed to polar residues. Residues 151 to 171 (VINWWFLVMAIIQAIPQLHYN) traverse the membrane as a helical segment. Topologically, residues 172–174 (PNH) are extracellular. Residues 175–195 (AWSTALPFAIVLVFGMLKDAF) traverse the membrane as a helical segment. Residues 196-373 (TDLGRRERDR…GFKRPHIEKD (178 aa)) lie on the Cytoplasmic side of the membrane. Residues 374–394 (INTYLFISFFIVFLTILISVM) traverse the membrane as a helical segment. Residues 395 to 452 (SKWSVQERDSGDTGVTDAGASSGSGSSSGETSQTYGSSVEFMLGSRDLLQNPWMSILR) lie on the Extracellular side of the membrane. A disordered region spans residues 402–426 (RDSGDTGVTDAGASSGSGSSSGETS). Residues 407-426 (TGVTDAGASSGSGSSSGETS) show a composition bias toward low complexity. A helical membrane pass occupies residues 453–473 (FLAVYAPVLPLSLPLILDVVY). Residues 474-2258 (LLQSVLIEGD…VHGRLSLMRV (1785 aa)) lie on the Cytoplasmic side of the membrane. Disordered stretches follow at residues 486–535 (IRGG…QQPL), 550–699 (SEKF…ISGR), 831–918 (ETSA…ASSL), 932–966 (RLEETGSQKEEDSRSDRVSLSPSEGRVSGSRPQLA), 980–1047 (VGIQ…GELS), 1079–1164 (GMSF…MPAV), 1344–1593 (PSGT…SLKS), 1607–1652 (FRRG…TGTG), 1773–1861 (GGRG…GLRS), and 1881–1946 (DKQH…PQHL). The span at 523–535 (AHSSQNASLQQPL) shows a compositional bias: polar residues. 2 stretches are compositionally biased toward basic and acidic residues: residues 605 to 628 (ETLRADAEGAQERDREAEGNREQL) and 670 to 679 (RRSDDRDRKS). Positions 850-863 (SAASSRSQSAPASA) are enriched in low complexity. Residues 880 to 892 (QTLTNQQTGQQSP) are compositionally biased toward polar residues. The span at 906 to 917 (ASPGAADSPASS) shows a compositional bias: low complexity. Positions 932-948 (RLEETGSQKEEDSRSDR) are enriched in basic and acidic residues. Low complexity predominate over residues 983–996 (QSQHSSQSLLSSRQ). Residues 1025–1047 (DRMYSRDYHRESRSSSPRDGELS) are compositionally biased toward basic and acidic residues. Polar residues-rich tracts occupy residues 1084–1094 (SRPSSQFTFSS) and 1117–1130 (RSLTPPSERGTASP). Positions 1344–1357 (PSGTSASSGAPSGP) are enriched in low complexity. 2 stretches are compositionally biased toward gly residues: residues 1370–1381 (QGQGHGSLGAPG) and 1389–1400 (CLGGAGGSGARG). Over residues 1443–1454 (VPSPRPLSPAGP) the composition is skewed to pro residues. Over residues 1527–1542 (SFKEKHEEFAFSKDED) the composition is skewed to basic and acidic residues. The segment covering 1543 to 1567 (TATVDQDDTQSATDEEHDVEGEEEE) has biased composition (acidic residues). Over residues 1583-1593 (SASASLMSLKS) the composition is skewed to low complexity. Polar residues-rich tracts occupy residues 1628–1652 (GRSSSVERAQQPPTHGGFSTVTGTG), 1779–1791 (VSLSRLQSNSSAK), and 1843–1852 (VNPSGQTYSQ). A compositionally biased stretch (basic and acidic residues) spans 1881–1922 (DKQHQRGHGPEGDEGSHELEGHDAHTGDSHGGHHRDQAEPRA). Over residues 1933–1942 (RLPQKTQNRL) the composition is skewed to polar residues. Residues 2259 to 2279 (STVILWSFFKSLCIGLPTFLF) form a helical membrane-spanning segment. Residues 2280-2289 (QPQAFWSAVE) are Extracellular-facing. Residues 2290–2310 (VYDPLLLMIVDFFWTTLPGII) form a helical membrane-spanning segment. The Cytoplasmic segment spans residues 2311 to 2343 (HGYSDQDLPTHLLPSVPVLYTPGRRRLYFNGFR). Residues 2344–2364 (FILWTVEGIIYSFLIFYLLQA) form a helical membrane-spanning segment. Residues 2365–2376 (TWMDGNTFHDGQ) lie on the Extracellular side of the membrane. A helical membrane pass occupies residues 2377 to 2397 (VLGFHSYGILLLFGSLLQSNV). The Cytoplasmic segment spans residues 2398–2408 (RIILETSLWTP). A helical membrane pass occupies residues 2409-2429 (TFLFTTIVLCTIMFFPTVLLY). The Extracellular segment spans residues 2430-2444 (SVTGWPRRYMELAGR). The helical transmembrane segment at 2445-2465 (VVFAWPMLYFLIPLWVSIGIL) threads the bilayer. At 2466–2724 (VQLLLQVFTS…LKRLVPWYRV (259 aa)) the chain is on the cytoplasmic side. Residues 2725 to 2745 (IFMLIALYQLLSFLTEYFIDI) form a helical membrane-spanning segment. Residues 2746 to 2762 (HWNPGETEMEPWMCVPT) lie on the Extracellular side of the membrane. The chain crosses the membrane as a helical span at residues 2763–2783 (LVVEIGFAAVVVCTFYDFIFL). Over 2784–2785 (DH) the chain is Cytoplasmic. The helical transmembrane segment at 2786–2806 (FSLILNSIVFLMVSSSIVFYT) threads the bilayer. Over 2807–2823 (ASHVDGTLTSVLFPVFT) the chain is Extracellular. The helical transmembrane segment at 2824-2844 (FVILRISFLQAVVWNILFLIV) threads the bilayer. The Cytoplasmic segment spans residues 2845 to 2858 (TVARFMLDKKYLPP). A helical transmembrane segment spans residues 2859-2879 (LNFVHYIPLFIGIDVFVAFVG). The Extracellular portion of the chain corresponds to 2880-2903 (YRLEYNQRKSFLLDYSVDASRRKQ). The helical transmembrane segment at 2904 to 2924 (REILNTMLPSFVVDQMINSEL) threads the bilayer. At 2925–3693 (NEEGIPTSLK…RTHFYNNKSN (769 aa)) the chain is on the cytoplasmic side. The 209-residue stretch at 2942–3150 (SVIFCDVYEF…DTVNTASRMK (209 aa)) folds into the Guanylate cyclase 1 domain. Disordered stretches follow at residues 3214–3245 (DVISETGGQNGESRRSTASLPRQLETAGASSG), 3359–3402 (GQTE…SRFD), 3456–3475 (SGDEQAAGESSEADHDEVPL), 3485–3508 (QAREANEQESAKRSGGDAPPHTPT), 3523–3596 (GCAA…ETEK), and 3620–3653 (FRRRKPAAPSEAASPSSADTPMDSRVSPTSVDDE). The span at 3383–3402 (RADRRPAGRREDSRGDSRFD) shows a compositional bias: basic and acidic residues. Basic and acidic residues-rich tracts occupy residues 3485–3499 (QAREANEQESAKRSG), 3529–3541 (EEEKTAKEGRESE), and 3549–3569 (TESRDANGQRVSERDASDARE). Over residues 3626–3637 (AAPSEAASPSSA) the composition is skewed to low complexity. The helical transmembrane segment at 3694–3714 (INTIEQALIIFLVTFCVQTLT) threads the bilayer. The Extracellular portion of the chain corresponds to 3715-3736 (RLALPRFYVVCSHHTINLHVCT). Residues 3737 to 3757 (GLYWAVRATYTLAAFVLWMLF) traverse the membrane as a helical segment. At 3758-3772 (HYRNRKEVATCLELR) the chain is on the cytoplasmic side. The helical transmembrane segment at 3773–3793 (WMVFLLNLLFISASCVFALSN) threads the bilayer. Topologically, residues 3794–3895 (SWGVCGQQQE…GSDLVTANGR (102 aa)) are extracellular. Residues 3896 to 3916 (AYTYWLLSDTIELFFYIVILH) form a helical membrane-spanning segment. Over 3917-3921 (HNTGL) the chain is Cytoplasmic. A helical membrane pass occupies residues 3922–3942 (LFQNCILVDVLLMTMSLTFII). The Extracellular segment spans residues 3943-3950 (TTARETAS). A helical membrane pass occupies residues 3951–3971 (TVSTIATFPCYVFFNLVSAYC). Topologically, residues 3972-4367 (KEYIDRLTFY…GSTPGSALGS (396 aa)) are cytoplasmic. In terms of domain architecture, Guanylate cyclase 2 spans 4024-4159 (TFLFADICGF…MDVLTGNMME (136 aa)). 3 residues coordinate Mg(2+): Asp4029, Ile4030, and Asp4073. A disordered region spans residues 4292-4367 (ASHGDSGPSD…GSTPGSALGS (76 aa)). Residues 4333–4344 (DGLKQLRKEIER) show a composition bias toward basic and acidic residues. A compositionally biased stretch (polar residues) spans 4356 to 4367 (DIGSTPGSALGS).

In the N-terminal section; belongs to the cation transport ATPase (P-type) (TC 3.A.3) family. Type IV subfamily. This sequence in the C-terminal section; belongs to the adenylyl cyclase class-4/guanylyl cyclase family. As to quaternary structure, interacts with chaperone CDC50.1; the interaction regulates guanylate cyclase GC trafficking and sensing environmental changes. Interacts with UGO; the interaction regulates guanylate cyclase GC trafficking and catalytic activity. The cofactor is Mg(2+). Mn(2+) is required as a cofactor.

It localises to the cell membrane. The enzyme catalyses GTP = 3',5'-cyclic GMP + diphosphate. Catalyzes the synthesis of the second messenger cGMP from GTP. During the tachyzoite lytic growth cycle in host cells, detects and transduces environmental changes in potassium, phosphatidic acid and pH levels. By producing cGMP in response to these environmental changes, activates PKG and thereby regulates PKG-dependent microneme secretion which is essential for tachyzoite motility, host cell attachment invasion of and egress from host cells. May play a role in the fission of connected tachyzoites at their basal pole during egress. Does not display flippase activity towards phosphatidylserine, phosphatidic acid or phosphatidylcholine. The sequence is that of Guanylate cyclase from Toxoplasma gondii (strain ATCC 50853 / GT1).